The primary structure comprises 180 residues: Peptidyl-tRNA hydrolase (180 aa).

Y13 serves as a coordination point for tRNA. H18 acts as the Proton acceptor in catalysis. Y58, N60, and N100 together coordinate tRNA.

This sequence belongs to the PTH family. In terms of assembly, monomer.

It localises to the cytoplasm. The catalysed reaction is an N-acyl-L-alpha-aminoacyl-tRNA + H2O = an N-acyl-L-amino acid + a tRNA + H(+). Hydrolyzes ribosome-free peptidyl-tRNAs (with 1 or more amino acids incorporated), which drop off the ribosome during protein synthesis, or as a result of ribosome stalling. In terms of biological role, catalyzes the release of premature peptidyl moieties from peptidyl-tRNA molecules trapped in stalled 50S ribosomal subunits, and thus maintains levels of free tRNAs and 50S ribosomes. This chain is Peptidyl-tRNA hydrolase, found in Fervidobacterium nodosum (strain ATCC 35602 / DSM 5306 / Rt17-B1).